A 122-amino-acid polypeptide reads, in one-letter code: Large ribosomal subunit protein bL12 (122 aa).

The interval 96 to 122 (APKSLKTGLSKDEANEMKKKLEDAGAT) is disordered. The segment covering 104–122 (LSKDEANEMKKKLEDAGAT) has biased composition (basic and acidic residues).

The protein belongs to the bacterial ribosomal protein bL12 family. As to quaternary structure, homodimer. Part of the ribosomal stalk of the 50S ribosomal subunit. Forms a multimeric L10(L12)X complex, where L10 forms an elongated spine to which 2 to 4 L12 dimers bind in a sequential fashion. Binds GTP-bound translation factors.

Functionally, forms part of the ribosomal stalk which helps the ribosome interact with GTP-bound translation factors. Is thus essential for accurate translation. This chain is Large ribosomal subunit protein bL12, found in Liberibacter asiaticus (Citrus greening disease).